Reading from the N-terminus, the 107-residue chain is Iron-sulfur cluster assembly protein CyaY (107 aa).

Belongs to the frataxin family.

Involved in iron-sulfur (Fe-S) cluster assembly. May act as a regulator of Fe-S biogenesis. This Neisseria gonorrhoeae (strain ATCC 700825 / FA 1090) protein is Iron-sulfur cluster assembly protein CyaY.